We begin with the raw amino-acid sequence, 122 residues long: LYR motif-containing protein 1 (122 aa).

The protein belongs to the complex I LYR family.

In terms of biological role, may promote cell proliferation and inhibition of apoptosis of preadipocytes. The chain is LYR motif-containing protein 1 (Lyrm1) from Mus musculus (Mouse).